Here is a 683-residue protein sequence, read N- to C-terminus: Elongation factor G 1 (683 aa).

In terms of domain architecture, tr-type G spans 3-278; it reads DKMRNIGIMA…AVVDFLPAPN (276 aa). GTP contacts are provided by residues 12-19, 76-80, and 130-133; these read AHIDAGKT, DTPGH, and NKMD.

Belongs to the TRAFAC class translation factor GTPase superfamily. Classic translation factor GTPase family. EF-G/EF-2 subfamily.

It is found in the cytoplasm. Catalyzes the GTP-dependent ribosomal translocation step during translation elongation. During this step, the ribosome changes from the pre-translocational (PRE) to the post-translocational (POST) state as the newly formed A-site-bound peptidyl-tRNA and P-site-bound deacylated tRNA move to the P and E sites, respectively. Catalyzes the coordinated movement of the two tRNA molecules, the mRNA and conformational changes in the ribosome. The sequence is that of Elongation factor G 1 from Treponema denticola (strain ATCC 35405 / DSM 14222 / CIP 103919 / JCM 8153 / KCTC 15104).